A 589-amino-acid chain; its full sequence is Malto-oligosyltrehalose trehalohydrolase (589 aa).

256–261 contacts substrate; it reads GFDAVH. The active-site Nucleophile is D258. E295 functions as the Proton donor in the catalytic mechanism. Residues 320–324 and 390–395 each bind substrate; these read DDFHT and HDQIGN.

This sequence belongs to the glycosyl hydrolase 13 family.

The protein localises to the cytoplasm. It carries out the reaction hydrolysis of (1-&gt;4)-alpha-D-glucosidic linkage in 4-alpha-D-[(1-&gt;4)-alpha-D-glucanosyl]n trehalose to yield trehalose and (1-&gt;4)-alpha-D-glucan.. It functions in the pathway glycan biosynthesis; trehalose biosynthesis. The polypeptide is Malto-oligosyltrehalose trehalohydrolase (treZ) (Brevibacterium helvolum).